A 211-amino-acid polypeptide reads, in one-letter code: Histidine biosynthesis bifunctional protein HisIE (211 aa).

The interval 1–122 (MSFKAAEVSS…DAQEESQMVW (122 aa)) is phosphoribosyl-AMP cyclohydrolase. A phosphoribosyl-ATP pyrophosphohydrolase region spans residues 123-211 (LHQLEQLLAA…VVNKLKERHK (89 aa)).

The protein in the N-terminal section; belongs to the PRA-CH family. In the C-terminal section; belongs to the PRA-PH family.

The protein resides in the cytoplasm. The catalysed reaction is 1-(5-phospho-beta-D-ribosyl)-ATP + H2O = 1-(5-phospho-beta-D-ribosyl)-5'-AMP + diphosphate + H(+). It catalyses the reaction 1-(5-phospho-beta-D-ribosyl)-5'-AMP + H2O = 1-(5-phospho-beta-D-ribosyl)-5-[(5-phospho-beta-D-ribosylamino)methylideneamino]imidazole-4-carboxamide. Its pathway is amino-acid biosynthesis; L-histidine biosynthesis; L-histidine from 5-phospho-alpha-D-ribose 1-diphosphate: step 2/9. The protein operates within amino-acid biosynthesis; L-histidine biosynthesis; L-histidine from 5-phospho-alpha-D-ribose 1-diphosphate: step 3/9. The sequence is that of Histidine biosynthesis bifunctional protein HisIE from Vibrio parahaemolyticus serotype O3:K6 (strain RIMD 2210633).